A 189-amino-acid polypeptide reads, in one-letter code: Putative manganese efflux pump MntP (189 aa).

A run of 6 helical transmembrane segments spans residues Ile3–Ser23, Met41–Ala61, Ala62–Ile82, Ser103–Val123, Ile132–Met152, and Ile167–Gly187.

This sequence belongs to the MntP (TC 9.B.29) family.

Its subcellular location is the cell inner membrane. Its function is as follows. Probably functions as a manganese efflux pump. The chain is Putative manganese efflux pump MntP from Methylobacillus flagellatus (strain ATCC 51484 / DSM 6875 / VKM B-1610 / KT).